The following is a 424-amino-acid chain: Proline--tRNA ligase (424 aa).

This sequence belongs to the class-II aminoacyl-tRNA synthetase family. ProS type 2 subfamily. In terms of assembly, homodimer.

The protein resides in the cytoplasm. It catalyses the reaction tRNA(Pro) + L-proline + ATP = L-prolyl-tRNA(Pro) + AMP + diphosphate. In terms of biological role, catalyzes the attachment of proline to tRNA(Pro) in a two-step reaction: proline is first activated by ATP to form Pro-AMP and then transferred to the acceptor end of tRNA(Pro). The chain is Proline--tRNA ligase from Ehrlichia chaffeensis (strain ATCC CRL-10679 / Arkansas).